Consider the following 326-residue polypeptide: Vitamin B12 import system permease protein BtuC (326 aa).

The next 9 helical transmembrane spans lie at 13-35 (IRWL…CAGE), 55-77 (IRLP…GAVM), 90-107 (LLGV…AVLL), 111-133 (QLPN…LILL), 146-168 (LLAG…YFST), 188-205 (WRQS…LWIC), 242-264 (MVGV…PHIL), 274-296 (VLLP…VARL), and 303-322 (LPIG…WLLL).

The protein belongs to the binding-protein-dependent transport system permease family. FecCD subfamily. As to quaternary structure, the complex is composed of two ATP-binding proteins (BtuD), two transmembrane proteins (BtuC) and a solute-binding protein (BtuF).

Its subcellular location is the cell inner membrane. Its function is as follows. Part of the ABC transporter complex BtuCDF involved in vitamin B12 import. Involved in the translocation of the substrate across the membrane. In Shigella flexneri, this protein is Vitamin B12 import system permease protein BtuC.